A 237-amino-acid polypeptide reads, in one-letter code: Phosphoribosylaminoimidazole-succinocarboxamide synthase (237 aa).

The protein belongs to the SAICAR synthetase family.

The enzyme catalyses 5-amino-1-(5-phospho-D-ribosyl)imidazole-4-carboxylate + L-aspartate + ATP = (2S)-2-[5-amino-1-(5-phospho-beta-D-ribosyl)imidazole-4-carboxamido]succinate + ADP + phosphate + 2 H(+). The protein operates within purine metabolism; IMP biosynthesis via de novo pathway; 5-amino-1-(5-phospho-D-ribosyl)imidazole-4-carboxamide from 5-amino-1-(5-phospho-D-ribosyl)imidazole-4-carboxylate: step 1/2. The protein is Phosphoribosylaminoimidazole-succinocarboxamide synthase of Psychrobacter arcticus (strain DSM 17307 / VKM B-2377 / 273-4).